The chain runs to 643 residues: Alpha-dioxygenase 1 (643 aa).

Histidine 167 serves as the catalytic Proton acceptor. Aspartate 168 lines the Ca(2+) pocket. Histidine 172 contributes to the heme b binding site. Threonine 220, tryptophan 222, aspartate 224, and serine 226 together coordinate Ca(2+). Residues histidine 392, arginine 489, and arginine 493 each coordinate heme b.

It belongs to the peroxidase family. Requires heme b as cofactor. Ca(2+) is required as a cofactor.

Its function is as follows. Alpha-dioxygenase that catalyzes the primary oxygenation step of a variety of 14-20 carbon fatty acids, containing up to three unsaturated bonds, into their corresponding 2R-hydroperoxides. Involved in the production of oxylipins that function in cell signaling, wound healing, and protection from infection. The lipid-derived signaling pathway is involved in the initial response of hot pepper plants to pathogen infection. This is Alpha-dioxygenase 1 from Capsicum annuum (Capsicum pepper).